We begin with the raw amino-acid sequence, 368 residues long: E3 ubiquitin-protein ligase makorin (368 aa).

2 C3H1-type zinc fingers span residues 2-29 (STKR…HDWN) and 30-57 (DQPN…HVKV). A disordered region spans residues 58 to 81 (SRNPTVAPPPSSSTTTRASSSLQP). A compositionally biased stretch (low complexity) spans 69–78 (SSTTTRASSS). A C3H1-type 3 zinc finger spans residues 147 to 174 (PADLPICSFAAGGNCPYGEECPQMHGDL). The interval 175–202 (CTTCGKMCLHPYRPDEREEHTKLCEKNH) is makorin-type Cys-His. An RING-type zinc finger spans residues 216–274 (CSVCLDRVLSKPTAAERKFGLLSECDHPFCISCIRNWRNNSPTSGMDVNSALRACPICR). The segment at 303-332 (KLKSIDCKYFDFGTGTCPFGSSCFYKHAYR) adopts a C3H1-type 4 zinc-finger fold.

Expressed in primary roots and leaves. Detected in vascular bundle tissues.

It catalyses the reaction S-ubiquitinyl-[E2 ubiquitin-conjugating enzyme]-L-cysteine + [acceptor protein]-L-lysine = [E2 ubiquitin-conjugating enzyme]-L-cysteine + N(6)-ubiquitinyl-[acceptor protein]-L-lysine.. It functions in the pathway protein modification; protein ubiquitination. E3 ubiquitin ligase catalyzing the covalent attachment of ubiquitin moieties onto substrate proteins. The polypeptide is E3 ubiquitin-protein ligase makorin (MKRN) (Oryza sativa subsp. japonica (Rice)).